Consider the following 155-residue polypeptide: Small ribosomal subunit protein uS7 (155 aa).

This sequence belongs to the universal ribosomal protein uS7 family. As to quaternary structure, part of the 30S ribosomal subunit. Contacts proteins S9 and S11.

Its function is as follows. One of the primary rRNA binding proteins, it binds directly to 16S rRNA where it nucleates assembly of the head domain of the 30S subunit. Is located at the subunit interface close to the decoding center, probably blocks exit of the E-site tRNA. The chain is Small ribosomal subunit protein uS7 from Fervidobacterium nodosum (strain ATCC 35602 / DSM 5306 / Rt17-B1).